A 434-amino-acid chain; its full sequence is V-type ATP synthase beta chain (434 aa).

This sequence belongs to the ATPase alpha/beta chains family.

Functionally, produces ATP from ADP in the presence of a proton gradient across the membrane. The V-type beta chain is a regulatory subunit. This Borrelia garinii subsp. bavariensis (strain ATCC BAA-2496 / DSM 23469 / PBi) (Borreliella bavariensis) protein is V-type ATP synthase beta chain.